Consider the following 265-residue polypeptide: Membrane steroid-binding protein 2 (265 aa).

A helical membrane pass occupies residues 63 to 85 (WAAARSASPVAVIAAVAGAAVVY). Residues 94–116 (PPPPPARPREEPSEEAPPPPEPV) are disordered. Residues 118–217 (VGEITAEELL…SKYVKVGTIK (100 aa)) enclose the Cytochrome b5 heme-binding domain. Residues 120-217 (EITAEELLQY…SKYVKVGTIK (98 aa)) are steroid-binding.

It belongs to the cytochrome b5 family. MAPR subfamily.

It localises to the cell membrane. Functionally, binds multiple steroid compounds. The protein is Membrane steroid-binding protein 2 of Oryza sativa subsp. japonica (Rice).